Reading from the N-terminus, the 565-residue chain is Estrogen receptor gamma (565 aa).

Positions 1–168 are modulating; that stretch reads MAVASSPEKD…TSGGKTDLHY (168 aa). NR C4-type zinc fingers lie at residues 169–189 and 205–229; these read CAVC…CEGC and CPAT…LRKC. The nuclear receptor DNA-binding region spans 169-234; the sequence is CAVCHDYASG…RLRKCYEVGM (66 aa). The tract at residues 235-285 is hinge; it reads TKCGMRKERGNYRSPQMRRMTRLTSQGRTDSSSVLTGSAVVSLNAPQPSAL. The region spanning 286-516 is the NR LBD domain; it reads TSEQLIERLM…DLLLEMLDAH (231 aa). Residues 522–565 form a disordered region; that stretch reads RLPRRSPEQEPEDQADAPAPPHSSGSGPSYTWTPSSSEGAGEPQ.

It belongs to the nuclear hormone receptor family. NR3 subfamily. Homodimer. In terms of tissue distribution, abundant in the ovary and testes, barely detectable in the brain and muscle and undetectable in the liver.

It is found in the nucleus. In terms of biological role, the steroid hormones and their receptors are involved in the regulation of eukaryotic gene expression and affect cellular proliferation and differentiation in target tissues. This is Estrogen receptor gamma (esr3) from Micropogonias undulatus (Atlantic croaker).